The primary structure comprises 87 residues: MANIKSQIKRNKTNEKARLRNQAVRSAVRTEIRKFNAAIEAGDKDAAQAQLRTASRALDKAVTKGVFHINNAANKKSNMATAFNKLG.

The interval 1 to 22 (MANIKSQIKRNKTNEKARLRNQ) is disordered.

The protein belongs to the bacterial ribosomal protein bS20 family.

In terms of biological role, binds directly to 16S ribosomal RNA. In Corynebacterium glutamicum (strain R), this protein is Small ribosomal subunit protein bS20.